Reading from the N-terminus, the 187-residue chain is Elongation factor P (187 aa).

The protein belongs to the elongation factor P family.

The protein resides in the cytoplasm. Its pathway is protein biosynthesis; polypeptide chain elongation. Its function is as follows. Involved in peptide bond synthesis. Stimulates efficient translation and peptide-bond synthesis on native or reconstituted 70S ribosomes in vitro. Probably functions indirectly by altering the affinity of the ribosome for aminoacyl-tRNA, thus increasing their reactivity as acceptors for peptidyl transferase. The sequence is that of Elongation factor P from Corynebacterium diphtheriae (strain ATCC 700971 / NCTC 13129 / Biotype gravis).